A 271-amino-acid chain; its full sequence is Cobalt import ATP-binding protein CbiO (271 aa).

The ABC transporter domain occupies 2–236; it reads LATSDLWFRY…TEAMEHAGLT (235 aa). 34-41 is a binding site for ATP; the sequence is GANGCGKS.

This sequence belongs to the ABC transporter superfamily. Cobalt importer (TC 3.A.1.18.1) family. Forms an energy-coupling factor (ECF) transporter complex composed of an ATP-binding protein (A component, CbiO), a transmembrane protein (T component, CbiQ) and 2 possible substrate-capture proteins (S components, CbiM and CbiN) of unknown stoichimetry.

It localises to the cell inner membrane. The protein operates within cofactor biosynthesis; adenosylcobalamin biosynthesis. In terms of biological role, part of the energy-coupling factor (ECF) transporter complex CbiMNOQ involved in cobalt import. Presumably responsible for energy coupling to the transport system. In Salmonella paratyphi A (strain ATCC 9150 / SARB42), this protein is Cobalt import ATP-binding protein CbiO.